Here is a 212-residue protein sequence, read N- to C-terminus: Golgi SNAP receptor complex member 2 (212 aa).

The residue at position 1 (Met-1) is an N-acetylmethionine. Topologically, residues 1–190 (MDPLFQQTHK…LIEKRAFQDK (190 aa)) are cytoplasmic. The stretch at 61–107 (NKRQNARLRVDQLKYDVQHLQTALRNFQHRRHAREQQERQREELLSR) forms a coiled coil. Residues 118–120 (IPM) carry the IxM motif; signal for cargo packaging into COPII-coated vesicles motif. A helical; Anchor for type IV membrane protein transmembrane segment spans residues 191-211 (YFMIGGMLLTCVVMFLVVQYL). Residue Thr-212 is a topological domain, vesicular.

The protein belongs to the GOSR2 family. In terms of assembly, part of a unique SNARE complex composed of the Golgi SNAREs GOSR1, STX5 and YKT6. Interacts (via IxM motif) with SEC24C and SEC24D; mediates GOSR2 packaging into COPII-coated vesicles. Interacts with BET1.

The protein resides in the golgi apparatus. It localises to the cis-Golgi network membrane. It is found in the golgi apparatus membrane. The protein localises to the endoplasmic reticulum membrane. Functionally, involved in transport of proteins from the cis/medial-Golgi to the trans-Golgi network. The protein is Golgi SNAP receptor complex member 2 (GOSR2) of Homo sapiens (Human).